The following is a 377-amino-acid chain: Chaperone protein DnaJ (377 aa).

The J domain maps to 5-69 (DYYEVLGISK…QKRAQYDQYG (65 aa)). The CR-type zinc-finger motif lies at 134–216 (GKDAEIEIPR…CHGKGRVTKT (83 aa)). Zn(2+)-binding residues include Cys147, Cys150, Cys164, Cys167, Cys190, Cys193, Cys204, and Cys207. CXXCXGXG motif repeat units follow at residues 147 to 154 (CDTCHGSG), 164 to 171 (CSHCGGKG), 190 to 197 (CQYCNGTG), and 204 to 211 (CPTCHGKG).

The protein belongs to the DnaJ family. In terms of assembly, homodimer. Zn(2+) is required as a cofactor.

The protein localises to the cytoplasm. In terms of biological role, participates actively in the response to hyperosmotic and heat shock by preventing the aggregation of stress-denatured proteins and by disaggregating proteins, also in an autonomous, DnaK-independent fashion. Unfolded proteins bind initially to DnaJ; upon interaction with the DnaJ-bound protein, DnaK hydrolyzes its bound ATP, resulting in the formation of a stable complex. GrpE releases ADP from DnaK; ATP binding to DnaK triggers the release of the substrate protein, thus completing the reaction cycle. Several rounds of ATP-dependent interactions between DnaJ, DnaK and GrpE are required for fully efficient folding. Also involved, together with DnaK and GrpE, in the DNA replication of plasmids through activation of initiation proteins. The chain is Chaperone protein DnaJ from Listeria monocytogenes serotype 1/2a (strain 10403S).